The following is a 706-amino-acid chain: UvrABC system protein C (706 aa).

The GIY-YIG domain occupies 16 to 95 (VEPGVYRFRD…IKEFDPRFNV (80 aa)). A UVR domain is found at 208–243 (DRLAKDMEQQMTAAAEQLDFERAARLRDDISALKRA). The tract at residues 651 to 706 (APQNGTAPDPAPGTGDPQTPADPHSAATAADIEDDRHATGATGPQMNGSEQQVDRV) is disordered. Residues 692 to 706 (TGPQMNGSEQQVDRV) show a composition bias toward polar residues.

This sequence belongs to the UvrC family. In terms of assembly, interacts with UvrB in an incision complex.

It localises to the cytoplasm. Functionally, the UvrABC repair system catalyzes the recognition and processing of DNA lesions. UvrC both incises the 5' and 3' sides of the lesion. The N-terminal half is responsible for the 3' incision and the C-terminal half is responsible for the 5' incision. The protein is UvrABC system protein C of Mycolicibacterium smegmatis (strain ATCC 700084 / mc(2)155) (Mycobacterium smegmatis).